A 158-amino-acid polypeptide reads, in one-letter code: UPF0262 protein RSKD131_1985 (158 aa).

Belongs to the UPF0262 family.

The chain is UPF0262 protein RSKD131_1985 from Cereibacter sphaeroides (strain KD131 / KCTC 12085) (Rhodobacter sphaeroides).